A 130-amino-acid chain; its full sequence is Small ribosomal subunit protein bS16 (130 aa).

The span at 98 to 109 shows a compositional bias: basic and acidic residues; the sequence is AAAKQAAKDAAE. Residues 98-130 form a disordered region; the sequence is AAAKQAAKDAAEAKAAAAAEAEAPAADAEASEG. Residues 110–130 are compositionally biased toward low complexity; that stretch reads AKAAAAAEAEAPAADAEASEG.

It belongs to the bacterial ribosomal protein bS16 family.

The sequence is that of Small ribosomal subunit protein bS16 from Synechococcus sp. (strain CC9902).